A 372-amino-acid polypeptide reads, in one-letter code: Alanine racemase (372 aa).

The active-site Proton acceptor; specific for D-alanine is lysine 37. N6-(pyridoxal phosphate)lysine is present on lysine 37. Residue arginine 136 participates in substrate binding. Catalysis depends on tyrosine 265, which acts as the Proton acceptor; specific for L-alanine. A substrate-binding site is contributed by methionine 313.

The protein belongs to the alanine racemase family. Requires pyridoxal 5'-phosphate as cofactor.

It catalyses the reaction L-alanine = D-alanine. Its pathway is amino-acid biosynthesis; D-alanine biosynthesis; D-alanine from L-alanine: step 1/1. Catalyzes the interconversion of L-alanine and D-alanine. May also act on other amino acids. The polypeptide is Alanine racemase (alr) (Synechocystis sp. (strain ATCC 27184 / PCC 6803 / Kazusa)).